The primary structure comprises 867 residues: Alanine--tRNA ligase (867 aa).

Residues His-554, His-558, Cys-656, and His-660 each contribute to the Zn(2+) site.

This sequence belongs to the class-II aminoacyl-tRNA synthetase family. The cofactor is Zn(2+).

It is found in the cytoplasm. It carries out the reaction tRNA(Ala) + L-alanine + ATP = L-alanyl-tRNA(Ala) + AMP + diphosphate. Functionally, catalyzes the attachment of alanine to tRNA(Ala) in a two-step reaction: alanine is first activated by ATP to form Ala-AMP and then transferred to the acceptor end of tRNA(Ala). Also edits incorrectly charged Ser-tRNA(Ala) and Gly-tRNA(Ala) via its editing domain. In Methylococcus capsulatus (strain ATCC 33009 / NCIMB 11132 / Bath), this protein is Alanine--tRNA ligase.